Here is a 347-residue protein sequence, read N- to C-terminus: Protein RecA (347 aa).

ATP is bound at residue 64-71 (GPESSGKT).

It belongs to the RecA family.

It localises to the cytoplasm. Its function is as follows. Can catalyze the hydrolysis of ATP in the presence of single-stranded DNA, the ATP-dependent uptake of single-stranded DNA by duplex DNA, and the ATP-dependent hybridization of homologous single-stranded DNAs. It interacts with LexA causing its activation and leading to its autocatalytic cleavage. The protein is Protein RecA of Bartonella henselae (strain ATCC 49882 / DSM 28221 / CCUG 30454 / Houston 1) (Rochalimaea henselae).